A 447-amino-acid polypeptide reads, in one-letter code: N-succinylarginine dihydrolase (447 aa).

Residues 19-28 (AGLSFGNEAS), N110, and 137-138 (HR) each bind substrate. The active site involves E174. Position 212 (R212) interacts with substrate. The active site involves H248. Substrate is bound by residues D250 and N359. Catalysis depends on C365, which acts as the Nucleophile.

Belongs to the succinylarginine dihydrolase family. As to quaternary structure, homodimer.

It carries out the reaction N(2)-succinyl-L-arginine + 2 H2O + 2 H(+) = N(2)-succinyl-L-ornithine + 2 NH4(+) + CO2. The protein operates within amino-acid degradation; L-arginine degradation via AST pathway; L-glutamate and succinate from L-arginine: step 2/5. Functionally, catalyzes the hydrolysis of N(2)-succinylarginine into N(2)-succinylornithine, ammonia and CO(2). In Shigella boydii serotype 4 (strain Sb227), this protein is N-succinylarginine dihydrolase.